A 577-amino-acid chain; its full sequence is Arginine--tRNA ligase (577 aa).

Positions 122–132 match the 'HIGH' region motif; that stretch reads PNVAKEMHVGH.

This sequence belongs to the class-I aminoacyl-tRNA synthetase family. As to quaternary structure, monomer.

It localises to the cytoplasm. It carries out the reaction tRNA(Arg) + L-arginine + ATP = L-arginyl-tRNA(Arg) + AMP + diphosphate. The sequence is that of Arginine--tRNA ligase from Salmonella agona (strain SL483).